The sequence spans 277 residues: 3-methyl-2-oxobutanoate hydroxymethyltransferase (277 aa).

Mg(2+) is bound by residues Asp-53 and Asp-96. 3-methyl-2-oxobutanoate is bound by residues 53–54 (DS), Asp-96, and Lys-126. Glu-128 contacts Mg(2+). Catalysis depends on Glu-195, which acts as the Proton acceptor.

The protein belongs to the PanB family. Homodecamer; pentamer of dimers. Requires Mg(2+) as cofactor.

It is found in the cytoplasm. The catalysed reaction is 3-methyl-2-oxobutanoate + (6R)-5,10-methylene-5,6,7,8-tetrahydrofolate + H2O = 2-dehydropantoate + (6S)-5,6,7,8-tetrahydrofolate. Its pathway is cofactor biosynthesis; (R)-pantothenate biosynthesis; (R)-pantoate from 3-methyl-2-oxobutanoate: step 1/2. In terms of biological role, catalyzes the reversible reaction in which hydroxymethyl group from 5,10-methylenetetrahydrofolate is transferred onto alpha-ketoisovalerate to form ketopantoate. This is 3-methyl-2-oxobutanoate hydroxymethyltransferase from Chlorobaculum tepidum (strain ATCC 49652 / DSM 12025 / NBRC 103806 / TLS) (Chlorobium tepidum).